A 277-amino-acid chain; its full sequence is Orotidine 5'-phosphate decarboxylase (277 aa).

Lys93 functions as the Proton donor in the catalytic mechanism.

It belongs to the OMP decarboxylase family. Type 2 subfamily.

The catalysed reaction is orotidine 5'-phosphate + H(+) = UMP + CO2. It participates in pyrimidine metabolism; UMP biosynthesis via de novo pathway; UMP from orotate: step 2/2. The protein is Orotidine 5'-phosphate decarboxylase of Haloarcula marismortui (strain ATCC 43049 / DSM 3752 / JCM 8966 / VKM B-1809) (Halobacterium marismortui).